A 564-amino-acid polypeptide reads, in one-letter code: Septation ring formation regulator EzrA (564 aa).

The Extracellular portion of the chain corresponds to 1–2 (ME). Residues 3–21 (FVIGLLALFLILFATGYLF) traverse the membrane as a helical segment. Topologically, residues 22 to 564 (RKNIYKEIDR…RLEADAKQPE (543 aa)) are cytoplasmic. Coiled coils occupy residues 99-159 (QKSK…AYSH), 243-281 (KGYKLDHIQVEKELENLLKELKRAEDALLDELDLEEAAA), and 310-498 (KVPE…VELV).

It belongs to the EzrA family.

The protein localises to the cell membrane. Functionally, negative regulator of FtsZ ring formation; modulates the frequency and position of FtsZ ring formation. Inhibits FtsZ ring formation at polar sites. Interacts either with FtsZ or with one of its binding partners to promote depolymerization. This Bacillus licheniformis (strain ATCC 14580 / DSM 13 / JCM 2505 / CCUG 7422 / NBRC 12200 / NCIMB 9375 / NCTC 10341 / NRRL NRS-1264 / Gibson 46) protein is Septation ring formation regulator EzrA.